Here is a 189-residue protein sequence, read N- to C-terminus: Peptidyl-tRNA hydrolase (189 aa).

Tyrosine 15 serves as a coordination point for tRNA. Catalysis depends on histidine 20, which acts as the Proton acceptor. 3 residues coordinate tRNA: phenylalanine 66, asparagine 68, and asparagine 114.

It belongs to the PTH family. In terms of assembly, monomer.

It localises to the cytoplasm. The enzyme catalyses an N-acyl-L-alpha-aminoacyl-tRNA + H2O = an N-acyl-L-amino acid + a tRNA + H(+). Hydrolyzes ribosome-free peptidyl-tRNAs (with 1 or more amino acids incorporated), which drop off the ribosome during protein synthesis, or as a result of ribosome stalling. Functionally, catalyzes the release of premature peptidyl moieties from peptidyl-tRNA molecules trapped in stalled 50S ribosomal subunits, and thus maintains levels of free tRNAs and 50S ribosomes. This Streptococcus equi subsp. zooepidemicus (strain MGCS10565) protein is Peptidyl-tRNA hydrolase.